Consider the following 210-residue polypeptide: Somatotropin (210 aa).

A signal peptide spans 1 to 23; it reads MARVLVLLSVVLVSLLVNQGRAS. H38 contacts Zn(2+). C71 and C183 form a disulfide bridge. Residue E192 coordinates Zn(2+). A disulfide bridge links C200 with C208.

This sequence belongs to the somatotropin/prolactin family.

The protein resides in the secreted. Functionally, growth hormone plays an important role in growth control. The chain is Somatotropin (gh) from Cyprinus carpio (Common carp).